The sequence spans 460 residues: Ammonium transporter 1 member 3 (460 aa).

10 helical membrane passes run 15–37 (AIYLLFSAYLVFVMQLGFAMLCA), 50–72 (LTNVVDAVVGSLSYYLFGFAFAF), 98–117 (FFLYQWAFAIAVAGITSGSI), 124–146 (TAYLVFSFFLTGFVYPVVAHWLW), 166–188 (IDFAGSGVVHLVGGIAGFWGSIV), 209–227 (NATLVVLGTLLLWFGWFGF), 255–277 (AVTTTLAGSTAGIVTLFGRRLLV), 305–327 (PWAAILCGFCAAWVLIGLNILAL), 337–356 (AAQLHGGCGAWGLIFTGLFA), and 377–399 (GLILGGGWGLFGAQIVELLSIVV).

This sequence belongs to the ammonia transporter channel (TC 1.A.11.2) family. As to expression, leaves.

It is found in the membrane. In terms of biological role, ammonium transporter that may be involved in ammonium transport throughout the plant. In Solanum lycopersicum (Tomato), this protein is Ammonium transporter 1 member 3 (AMT1-3).